The following is a 548-amino-acid chain: Natural resistance-associated macrophage protein 1 (548 aa).

The segment covering 1-11 (MSGDTGPSKQG) has biased composition (polar residues). The interval 1–38 (MSGDTGPSKQGGTRYGSISSPPSPGPQQAPPGGTYLGE) is disordered. The Cytoplasmic portion of the chain corresponds to 1–55 (MSGDTGPSKQGGTRYGSISSPPSPGPQQAPPGGTYLGEKIPIPDTESGAFSLRKL). A helical membrane pass occupies residues 56 to 73 (WAFTGPGFLMSIAFLDPG). Topologically, residues 74-82 (NIESDLQAG) are extracellular. A helical membrane pass occupies residues 83–102 (AVAGFKLLWVLLWATVLGLL). Residues 103–139 (CQRLAARLGVVTGKDLGEVCHLYYPKVPRILLWLTIE) are Cytoplasmic-facing. Residues 140–160 (LAIVGSDMQEVIGTAIAFSLL) traverse the membrane as a helical segment. Topologically, residues 161-164 (SAGR) are extracellular. Residues 165–184 (IPLWGGVLITVVDTFFFLFL) form a helical membrane-spanning segment. Topologically, residues 185–193 (DNYGLRKLE) are cytoplasmic. Residues 194 to 214 (AFFGFLITIMALTFGYEYVVA) form a helical membrane-spanning segment. The Extracellular segment spans residues 215–237 (QPAQGALLQGLFLPSCRGCGQPE). A helical membrane pass occupies residues 238 to 256 (LLQAVGIIGAIIMPHNIYL). Topologically, residues 257–284 (HSSLVKSREVDRSRRADIREANMYFLIE) are cytoplasmic. Residues 285 to 304 (ATIALSVSFLINLFVMAVFG) traverse the membrane as a helical segment. Over 305–346 (QAFYKQTNQAAFNICAKSSLHDYAPIFPRNNLTVAVDIYQGG) the chain is Extracellular. Asn335 carries N-linked (GlcNAc...) asparagine glycosylation. Residues 347-366 (VILGCLFGPAALYIWAVGLL) form a helical membrane-spanning segment. The Cytoplasmic portion of the chain corresponds to 367–397 (AAGQSSTMTGTYAGQFVMEGFLKLRWSRFAR). A helical transmembrane segment spans residues 398 to 415 (VLLTRSCAILPTVLLAVF). Over 416–426 (RDLRDLSGLND) the chain is Extracellular. The helical transmembrane segment at 427 to 447 (LLNVLQSLLLPFAVLPILTFT) threads the bilayer. The Cytoplasmic portion of the chain corresponds to 448-463 (SMPALMQEFANGLVSK). A helical membrane pass occupies residues 464–485 (VITSSIMVLVCAVNLYFVISYV). The Extracellular segment spans residues 486–493 (PSLPHPAY). The chain crosses the membrane as a helical span at residues 494–513 (FSLVALLAAAYLGLTTYLVW). Over 514–548 (TCLITQGATFLAHNSHQRFLYGLPEEDQEKGRTSG) the chain is Cytoplasmic.

Belongs to the NRAMP family.

It is found in the late endosome membrane. It localises to the lysosome membrane. The enzyme catalyses Zn(2+)(in) + H(+)(out) = Zn(2+)(out) + H(+)(in). The catalysed reaction is Fe(2+)(in) + H(+)(out) = Fe(2+)(out) + H(+)(in). It carries out the reaction Mn(2+)(in) + H(+)(out) = Mn(2+)(out) + H(+)(in). Its function is as follows. Macrophage-specific antiporter that fluxes metal ions in either direction against a proton gradient. Localized to late endosomal lysosomal membranes, delivers bivalent cations from the cytosol into these acidic compartments where they may directly affect antimicrobial activity. Involved in iron metabolism and host natural resistance to infection with intracellular parasites. Pathogen resistance involves sequestration of Fe(2+) and Mn(2+), cofactors of both prokaryotic and eukaryotic catalases and superoxide dismutases, not only to protect the macrophage against its own generation of reactive oxygen species, but to deny the cations to the pathogen for synthesis of its protective enzymes. The sequence is that of Natural resistance-associated macrophage protein 1 (SLC11A1) from Bubalus bubalis (Domestic water buffalo).